The primary structure comprises 793 residues: Ankyrin repeat domain-containing protein SOWAHB (793 aa).

Disordered regions lie at residues 83 to 185 (EEGL…QARA), 219 to 290 (ATAE…ELLT), 337 to 360 (QLPL…SSHS), and 396 to 543 (DFVD…SPRV). 3 stretches are compositionally biased toward low complexity: residues 96-108 (APSA…CSPR), 134-144 (AGAAARAADAA), and 175-185 (AAAAAGAQARA). Position 106 is a phosphoserine (S106). A compositionally biased stretch (basic and acidic residues) spans 220–244 (TAEEKPARALPAQDDRGASREREEG). Over residues 246–273 (LAEPAPVPAVAHSPPATVEAATSRASPP) the composition is skewed to low complexity. S271 bears the Phosphoserine mark. Residues 396–406 (DFVDQESDGSE) are compositionally biased toward acidic residues. 2 stretches are compositionally biased toward low complexity: residues 407–417 (ESSSGPKDSPG) and 498–508 (RSSLAGRAKLS). The span at 521-533 (KRSRRPPRSRKPS) shows a compositional bias: basic residues. ANK repeat units follow at residues 630–659 (TGYT…KAGI) and 669–699 (CGYT…RVNV). A Phosphoserine modification is found at S761.

This sequence belongs to the SOWAH family.

This Homo sapiens (Human) protein is Ankyrin repeat domain-containing protein SOWAHB (SOWAHB).